The primary structure comprises 83 residues: uncharacterized protein (83 aa).

Residues 57 to 83 form a disordered region; sequence ESVEEEEEFEDYDEFEEEEEYYYDDEY.

This is an uncharacterized protein from Archaeoglobus fulgidus (strain ATCC 49558 / DSM 4304 / JCM 9628 / NBRC 100126 / VC-16).